The following is a 401-amino-acid chain: LL-diaminopimelate aminotransferase (401 aa).

2 residues coordinate substrate: tyrosine 15 and glycine 42. Pyridoxal 5'-phosphate contacts are provided by residues tyrosine 72, 108–109, tyrosine 132, asparagine 176, tyrosine 207, and 235–237; these read AK and SFS. Substrate is bound by residues lysine 109, tyrosine 132, and asparagine 176. Lysine 238 bears the N6-(pyridoxal phosphate)lysine mark. Residues arginine 246 and asparagine 281 each coordinate pyridoxal 5'-phosphate. Residues asparagine 281 and arginine 377 each contribute to the substrate site.

It belongs to the class-I pyridoxal-phosphate-dependent aminotransferase family. LL-diaminopimelate aminotransferase subfamily. In terms of assembly, homodimer. It depends on pyridoxal 5'-phosphate as a cofactor.

It carries out the reaction (2S,6S)-2,6-diaminopimelate + 2-oxoglutarate = (S)-2,3,4,5-tetrahydrodipicolinate + L-glutamate + H2O + H(+). Its pathway is amino-acid biosynthesis; L-lysine biosynthesis via DAP pathway; LL-2,6-diaminopimelate from (S)-tetrahydrodipicolinate (aminotransferase route): step 1/1. Involved in the synthesis of meso-diaminopimelate (m-DAP or DL-DAP), required for both lysine and peptidoglycan biosynthesis. Catalyzes the direct conversion of tetrahydrodipicolinate to LL-diaminopimelate. This is LL-diaminopimelate aminotransferase from Azobacteroides pseudotrichonymphae genomovar. CFP2.